The primary structure comprises 272 residues: Dermonecrotic toxin LspaSicTox-alphaII1 (272 aa).

His-5 is an active-site residue. Residues Glu-25 and Asp-27 each contribute to the Mg(2+) site. Catalysis depends on His-41, which acts as the Nucleophile. Cystine bridges form between Cys-45–Cys-51 and Cys-47–Cys-190. Asp-85 provides a ligand contact to Mg(2+).

This sequence belongs to the arthropod phospholipase D family. Class II subfamily. Requires Mg(2+) as cofactor. Expressed by the venom gland.

The protein resides in the secreted. It catalyses the reaction an N-(acyl)-sphingosylphosphocholine = an N-(acyl)-sphingosyl-1,3-cyclic phosphate + choline. It carries out the reaction an N-(acyl)-sphingosylphosphoethanolamine = an N-(acyl)-sphingosyl-1,3-cyclic phosphate + ethanolamine. The catalysed reaction is a 1-acyl-sn-glycero-3-phosphocholine = a 1-acyl-sn-glycero-2,3-cyclic phosphate + choline. The enzyme catalyses a 1-acyl-sn-glycero-3-phosphoethanolamine = a 1-acyl-sn-glycero-2,3-cyclic phosphate + ethanolamine. Functionally, dermonecrotic toxins cleave the phosphodiester linkage between the phosphate and headgroup of certain phospholipids (sphingolipid and lysolipid substrates), forming an alcohol (often choline) and a cyclic phosphate. This toxin acts on sphingomyelin (SM). It may also act on ceramide phosphoethanolamine (CPE), lysophosphatidylcholine (LPC) and lysophosphatidylethanolamine (LPE), but not on lysophosphatidylserine (LPS), and lysophosphatidylglycerol (LPG). It acts by transphosphatidylation, releasing exclusively cyclic phosphate products as second products. Induces dermonecrosis, hemolysis, increased vascular permeability, edema, inflammatory response, and platelet aggregation. The protein is Dermonecrotic toxin LspaSicTox-alphaII1 of Loxosceles spadicea (Recluse spider).